Consider the following 171-residue polypeptide: NADH-ubiquinone oxidoreductase chain 6 (171 aa).

The next 5 helical transmembrane spans lie at 1-21 (MYVM…ISSK), 25-44 (IYGG…IIMG), 49-71 (FMGL…YTTA), 85-105 (VVIW…VAWM), and 150-170 (WFAA…IEII).

The protein belongs to the complex I subunit 6 family. As to quaternary structure, core subunit of respiratory chain NADH dehydrogenase (Complex I) which is composed of 45 different subunits.

The protein localises to the mitochondrion inner membrane. The enzyme catalyses a ubiquinone + NADH + 5 H(+)(in) = a ubiquinol + NAD(+) + 4 H(+)(out). In terms of biological role, core subunit of the mitochondrial membrane respiratory chain NADH dehydrogenase (Complex I) which catalyzes electron transfer from NADH through the respiratory chain, using ubiquinone as an electron acceptor. Essential for the catalytic activity and assembly of complex I. This chain is NADH-ubiquinone oxidoreductase chain 6 (MT-ND6), found in Lemur catta (Ring-tailed lemur).